The primary structure comprises 333 residues: tRNA (guanine(37)-N(1))/4-demethylwyosine(37)-methyltransferase Taw22 (333 aa).

Residues arginine 174, phenylalanine 191, glutamate 213–isoleucine 214, and aspartate 243–valine 244 each bind S-adenosyl-L-methionine.

Belongs to the class I-like SAM-binding methyltransferase superfamily. TRM5/TYW2 family.

It localises to the cytoplasm. The catalysed reaction is guanosine(37) in tRNA + S-adenosyl-L-methionine = N(1)-methylguanosine(37) in tRNA + S-adenosyl-L-homocysteine + H(+). It carries out the reaction 4-demethylwyosine(37) in tRNA(Phe) + S-adenosyl-L-methionine = isowyosine(37) in tRNA(Phe) + S-adenosyl-L-homocysteine + H(+). In terms of biological role, catalyzes both the N1-methylation of guanosine and the C7-methylation of 4-demethylwyosine (imG-14) at position 37 in tRNA(Phe). This Pyrococcus abyssi (strain GE5 / Orsay) protein is tRNA (guanine(37)-N(1))/4-demethylwyosine(37)-methyltransferase Taw22.